Here is a 515-residue protein sequence, read N- to C-terminus: BURP domain-containing protein 9 (515 aa).

Positions 1-29 (MKATGGPLPLILFLLIIIVLITAQHTAIA) are cleaved as a signal peptide. A BURP domain is found at 292–507 (YFFEDNLAPG…GRGSIIWVPV (216 aa)). N-linked (GlcNAc...) asparagine glycosylation is found at Asn321, Asn332, and Asn470.

In terms of tissue distribution, expressed in shoot and panicles.

The protein is BURP domain-containing protein 9 (BURP9) of Oryza sativa subsp. japonica (Rice).